Consider the following 932-residue polypeptide: DNA mismatch repair protein MutS (932 aa).

A compositionally biased stretch (acidic residues) spans 1 to 13; the sequence is MTTDTDTDVDAGT. Residues 1–26 form a disordered region; it reads MTTDTDTDVDAGTDLEPQPEGPPEKM. 648–655 contacts ATP; sequence GPNMSGKS. The segment at 865–892 is disordered; sequence NQQNQASDDDEIARSPRGADTNTDAGIN.

The protein belongs to the DNA mismatch repair MutS family.

Its function is as follows. This protein is involved in the repair of mismatches in DNA. It is possible that it carries out the mismatch recognition step. This protein has a weak ATPase activity. The chain is DNA mismatch repair protein MutS from Haloquadratum walsbyi (strain DSM 16790 / HBSQ001).